Here is a 333-residue protein sequence, read N- to C-terminus: Adenosine deaminase (333 aa).

2 residues coordinate Zn(2+): H12 and H14. Positions 14, 16, and 170 each coordinate substrate. Position 197 (H197) interacts with Zn(2+). Catalysis depends on E200, which acts as the Proton donor. Residue D278 coordinates Zn(2+). D279 contributes to the substrate binding site.

This sequence belongs to the metallo-dependent hydrolases superfamily. Adenosine and AMP deaminases family. Adenosine deaminase subfamily. Requires Zn(2+) as cofactor.

The catalysed reaction is adenosine + H2O + H(+) = inosine + NH4(+). It catalyses the reaction 2'-deoxyadenosine + H2O + H(+) = 2'-deoxyinosine + NH4(+). Its function is as follows. Catalyzes the hydrolytic deamination of adenosine and 2-deoxyadenosine. The polypeptide is Adenosine deaminase (Salmonella paratyphi C (strain RKS4594)).